Reading from the N-terminus, the 367-residue chain is Chorismate synthase (367 aa).

Positions Phe-41 to Arg-60 are disordered. Residues Arg-48 and Arg-54 each coordinate NADP(+). FMN-binding positions include Arg-125–Ser-127, Asn-238–Ala-239, Gly-278, Lys-293–Ser-297, and Arg-319.

It belongs to the chorismate synthase family. As to quaternary structure, homotetramer. FMNH2 is required as a cofactor.

The catalysed reaction is 5-O-(1-carboxyvinyl)-3-phosphoshikimate = chorismate + phosphate. It participates in metabolic intermediate biosynthesis; chorismate biosynthesis; chorismate from D-erythrose 4-phosphate and phosphoenolpyruvate: step 7/7. Catalyzes the anti-1,4-elimination of the C-3 phosphate and the C-6 proR hydrogen from 5-enolpyruvylshikimate-3-phosphate (EPSP) to yield chorismate, which is the branch point compound that serves as the starting substrate for the three terminal pathways of aromatic amino acid biosynthesis. This reaction introduces a second double bond into the aromatic ring system. This Xanthomonas euvesicatoria pv. vesicatoria (strain 85-10) (Xanthomonas campestris pv. vesicatoria) protein is Chorismate synthase.